The sequence spans 371 residues: Chorismate synthase (371 aa).

NADP(+) contacts are provided by R48 and R54. FMN is bound by residues 125–127 (RSS), 238–239 (NA), G278, 293–297 (KPTSS), and R319.

This sequence belongs to the chorismate synthase family. As to quaternary structure, homotetramer. Requires FMNH2 as cofactor.

The catalysed reaction is 5-O-(1-carboxyvinyl)-3-phosphoshikimate = chorismate + phosphate. It functions in the pathway metabolic intermediate biosynthesis; chorismate biosynthesis; chorismate from D-erythrose 4-phosphate and phosphoenolpyruvate: step 7/7. Its function is as follows. Catalyzes the anti-1,4-elimination of the C-3 phosphate and the C-6 proR hydrogen from 5-enolpyruvylshikimate-3-phosphate (EPSP) to yield chorismate, which is the branch point compound that serves as the starting substrate for the three terminal pathways of aromatic amino acid biosynthesis. This reaction introduces a second double bond into the aromatic ring system. This chain is Chorismate synthase, found in Saccharophagus degradans (strain 2-40 / ATCC 43961 / DSM 17024).